Consider the following 215-residue polypeptide: Nitrate/nitrite response regulator protein NarP (215 aa).

Residues 8 to 124 (QVMIVDDHPL…VLLEAIRAGA (117 aa)) form the Response regulatory domain. 4-aspartylphosphate is present on Asp-59. The region spanning 147–212 (EEDPFSVLTE…AATILFLQQR (66 aa)) is the HTH luxR-type domain. Residues 171–190 (NKQIASVLNISEQTVKVHIR) constitute a DNA-binding region (H-T-H motif).

Its function is as follows. This protein activates the expression of the nitrate reductase (narGHJI) and formate dehydrogenase-N (fdnGHI) operons and represses the transcription of the fumarate reductase (frdABCD) operon in response to a nitrate/nitrite induction signal transmitted by either the NarX or NarQ proteins. The chain is Nitrate/nitrite response regulator protein NarP (narP) from Escherichia coli (strain K12).